Consider the following 318-residue polypeptide: tRNA U34 carboxymethyltransferase (318 aa).

K88, W102, K107, G126, M192, Y196, and R311 together coordinate carboxy-S-adenosyl-L-methionine.

This sequence belongs to the class I-like SAM-binding methyltransferase superfamily. CmoB family. Homotetramer.

The catalysed reaction is carboxy-S-adenosyl-L-methionine + 5-hydroxyuridine(34) in tRNA = 5-carboxymethoxyuridine(34) in tRNA + S-adenosyl-L-homocysteine + H(+). Functionally, catalyzes carboxymethyl transfer from carboxy-S-adenosyl-L-methionine (Cx-SAM) to 5-hydroxyuridine (ho5U) to form 5-carboxymethoxyuridine (cmo5U) at position 34 in tRNAs. This is tRNA U34 carboxymethyltransferase from Pseudomonas fluorescens (strain SBW25).